The chain runs to 617 residues: Glutamine--fructose-6-phosphate aminotransferase [isomerizing] (617 aa).

Residue C2 is the Nucleophile; for GATase activity of the active site. Residues 2-222 (CGIIGLAFAE…DGEFGWISPE (221 aa)) form the Glutamine amidotransferase type-2 domain. SIS domains are found at residues 293-432 (AAGL…EAGR) and 466-607 (AASL…PDKP). The For Fru-6P isomerization activity role is filled by K612.

Homodimer.

Its subcellular location is the cytoplasm. The enzyme catalyses D-fructose 6-phosphate + L-glutamine = D-glucosamine 6-phosphate + L-glutamate. Its function is as follows. Catalyzes the first step in hexosamine metabolism, converting fructose-6P into glucosamine-6P using glutamine as a nitrogen source. The sequence is that of Glutamine--fructose-6-phosphate aminotransferase [isomerizing] from Aeropyrum pernix (strain ATCC 700893 / DSM 11879 / JCM 9820 / NBRC 100138 / K1).